A 419-amino-acid polypeptide reads, in one-letter code: L-rhamnose isomerase (419 aa).

His-262, Asp-294, and Asp-296 together coordinate Mn(2+).

It belongs to the rhamnose isomerase family. Homotetramer. It depends on Mn(2+) as a cofactor.

The protein localises to the cytoplasm. It catalyses the reaction L-rhamnopyranose = L-rhamnulose. Its pathway is carbohydrate degradation; L-rhamnose degradation; glycerone phosphate from L-rhamnose: step 1/3. Functionally, catalyzes the interconversion of L-rhamnose and L-rhamnulose. The polypeptide is L-rhamnose isomerase (Escherichia coli O139:H28 (strain E24377A / ETEC)).